Here is a 311-residue protein sequence, read N- to C-terminus: Retron Ec78 reverse transcriptase (311 aa).

The region spanning 15–241 (DSGISAFLVT…HNRHVTGVTI (227 aa)) is the Reverse transcriptase domain. Residues D96, D187, and D188 each contribute to the Mg(2+) site.

It belongs to the bacterial reverse transcriptase family.

The enzyme catalyses DNA(n) + a 2'-deoxyribonucleoside 5'-triphosphate = DNA(n+1) + diphosphate. Its function is as follows. Reverse transcriptase (RT) component of antiviral defense system retron Ec78, composed of a non-coding RNA (ncRNA), this reverse transcriptase (RT), a probable ATPase and a putative HNH endonuclease. Expression of retron Ec78 confers protection against bacteriophage T5. At multiplicity of infection (MOI) of 0.02 cultures slow growth when infected with T5 but do not collapse, at MOI 2 cultures enter growth stasis. Responsible for synthesis of msDNA-Ec78 (a linear ssDNA with a 5'-terminal phosphate residue). Unlike most known msDNAs the mature product does not have an RNA component. The retron transcript serves as primer and template for the reaction, and codes for the RT. Not mutagenic when cloned in E.coli. It is thought to be synthesized as a branched RNA with a 2',5'-phosphodiester linkage to ssDNA; the linkage is cleaved endonucleolytically by ExoVII (xseA-xseB) leaving the observed mature 5'-ssDNA terminus. Overexpression of the ncRNA and RT, which leads to increased levels of msDNA, is not mutagenic in vivo. As the stem in the msDNA does not have a mismatch it probably does not bind or sequester MutS and/or MutL. The polypeptide is Retron Ec78 reverse transcriptase (Escherichia coli).